We begin with the raw amino-acid sequence, 416 residues long: Tyrosine--tRNA ligase (416 aa).

Y40 is an L-tyrosine binding site. The short motif at A45–H54 is the 'HIGH' region element. L-tyrosine is bound by residues Y177 and Q181. The short motif at K237–S241 is the 'KMSKS' region element. Residue K240 coordinates ATP. The region spanning L351 to A416 is the S4 RNA-binding domain.

The protein belongs to the class-I aminoacyl-tRNA synthetase family. TyrS type 1 subfamily. In terms of assembly, homodimer.

The protein resides in the cytoplasm. The catalysed reaction is tRNA(Tyr) + L-tyrosine + ATP = L-tyrosyl-tRNA(Tyr) + AMP + diphosphate + H(+). Functionally, catalyzes the attachment of tyrosine to tRNA(Tyr) in a two-step reaction: tyrosine is first activated by ATP to form Tyr-AMP and then transferred to the acceptor end of tRNA(Tyr). The sequence is that of Tyrosine--tRNA ligase from Cereibacter sphaeroides (strain ATCC 17025 / ATH 2.4.3) (Rhodobacter sphaeroides).